A 1187-amino-acid chain; its full sequence is Nicotinate dehydrogenase subunit B (1187 aa).

Residues 764–784 (WWFGSLAGVFGAALGMLATAL) form a helical membrane-spanning segment. Cytochrome c domains are found at residues 804–907 (AMLE…MSQT), 949–1057 (AQWN…SSLE), and 1075–1163 (VSLS…RHRF). 9 residues coordinate heme c: Cys818, Cys821, His822, Cys964, Cys967, His968, Cys1088, Cys1091, and His1092.

The cofactor is Mo-molybdopterin cytosine dinucleotide.

It localises to the membrane. The catalysed reaction is 2 Fe(III)-[cytochrome] + nicotinate + H2O = 2 Fe(II)-[cytochrome] + 6-hydroxynicotinate + 2 H(+). It functions in the pathway cofactor degradation; nicotinate degradation. Its function is as follows. Subunit of the two-component enzyme NicAB that mediates nicotinate hydroxylation, the first step in the aerobic nicotinate degradation pathway. Mediates conversion of nicotinate into 6-hydroxynicotinate (6HNA). This is Nicotinate dehydrogenase subunit B (nicB) from Pseudomonas putida (strain ATCC 47054 / DSM 6125 / CFBP 8728 / NCIMB 11950 / KT2440).